Here is a 350-residue protein sequence, read N- to C-terminus: Cobalt-precorrin-5B C(1)-methyltransferase (350 aa).

It belongs to the CbiD family.

The enzyme catalyses Co-precorrin-5B + S-adenosyl-L-methionine = Co-precorrin-6A + S-adenosyl-L-homocysteine. Its pathway is cofactor biosynthesis; adenosylcobalamin biosynthesis; cob(II)yrinate a,c-diamide from sirohydrochlorin (anaerobic route): step 6/10. Catalyzes the methylation of C-1 in cobalt-precorrin-5B to form cobalt-precorrin-6A. The protein is Cobalt-precorrin-5B C(1)-methyltransferase of Sulfurisphaera tokodaii (strain DSM 16993 / JCM 10545 / NBRC 100140 / 7) (Sulfolobus tokodaii).